Consider the following 580-residue polypeptide: Arginine--tRNA ligase (580 aa).

The 'HIGH' region motif lies at 131–141 (ANPTGPMHVGH).

It belongs to the class-I aminoacyl-tRNA synthetase family. Monomer.

The protein resides in the cytoplasm. It catalyses the reaction tRNA(Arg) + L-arginine + ATP = L-arginyl-tRNA(Arg) + AMP + diphosphate. This Cereibacter sphaeroides (strain ATCC 17023 / DSM 158 / JCM 6121 / CCUG 31486 / LMG 2827 / NBRC 12203 / NCIMB 8253 / ATH 2.4.1.) (Rhodobacter sphaeroides) protein is Arginine--tRNA ligase.